Here is a 2472-residue protein sequence, read N- to C-terminus: Spectrin alpha chain, non-erythrocytic 1 (2472 aa).

The residue at position 1 (M1) is an N-acetylmethionine. Spectrin repeat units lie at residues 45-146 (RFQF…IKLL), 150-251 (KLVQ…QGKL), 256-358 (EVQR…ARLN), 361-465 (YRLQ…QYEQ), 468-570 (DLQL…AQLA), 574-676 (HLQQ…KLRE), 679-781 (QQQQ…QKLA), 785-888 (RLQQ…DLED), and 891-969 (QAQQ…ETGK). At S587 the chain carries Phosphoserine. K637 carries the N6-acetyllysine modification. At K803 the chain carries N6-acetyllysine. 6 positions are modified to phosphoserine: S924, S982, S999, S1029, S1031, and S1041. In terms of domain architecture, SH3 spans 967 to 1026 (TGKELVLALYDYQEKSPREVTMKKGDILTLLNSTNKDWWKVEVNDRQGFVPAAYVKKLDP). One copy of the Spectrin 10 repeat lies at 1096–1166 (LFREANELQQ…LESEGLMAEE (71 aa)). Y1176 carries the post-translational modification Phosphotyrosine. A phosphoserine mark is found at S1190, S1207, S1217, S1291, S1306, S1323, and S1338. The Spectrin 11 repeat unit spans residues 1233–1336 (HEVQRFHRDA…RADQRKAKLG (104 aa)). Spectrin repeat units follow at residues 1339 to 1442 (HDLQ…MMLD) and 1446 to 1549 (ELQL…KLGE). The residue at position 1519 (K1519) is an N6-acetyllysine. Phosphoserine occurs at positions 1550, 1557, 1578, 1615, and 1647. Spectrin repeat units lie at residues 1552-1656 (TLQQ…KLKE), 1659-1762 (KQQN…KLNE), 1764-1868 (HRLH…RLEE), 1871-1974 (EYQQ…KLDE), 1978-2081 (FLQF…KLLE), 2092-2194 (LFLT…LELQ), and 2206-2310 (LRQE…NLEQ). T2020 is subject to Phosphothreonine. N6-acetyllysine is present on K2052. 3 consecutive EF-hand domains span residues 2323–2358 (EALKEFSMMFKHFDKDKSGRLNHQEFKSCLRSLGYD), 2366–2401 (EPDPEFEAILDTVDPNRDGHVSLQEYMAFMISRETE), and 2404–2439 (KSSEEIESAFRALSSEGKPYVTKEELYQNLTREQAD). 10 residues coordinate Ca(2+): D2336, D2338, S2340, R2342, E2347, D2379, N2381, D2383, H2385, and E2390. The residue at position 2421 (K2421) is an N6-acetyllysine.

It belongs to the spectrin family. As to quaternary structure, like erythrocyte spectrin, the spectrin-like proteins are capable of forming dimers which can further associate to tetramers. Interacts (via C-terminal spectrin repeats) with TRPC4. Interacts with CALM and EMD. Interacts with isoform 1 of ACP1. Identified in a complex with ACTN4, CASK, IQGAP1, MAGI2, NPHS1 and SPTBN1. Interacts with SHANK3 (via ANK repeats). Interacts with CLN3; this interaction regulates the fodrin localization at the plasma membrane. Post-translationally, phosphorylation of Tyr-1176 decreases sensitivity to cleavage by calpain in vitro.

It is found in the cytoplasm. The protein resides in the cytoskeleton. It localises to the cell cortex. Functionally, fodrin, which seems to be involved in secretion, interacts with calmodulin in a calcium-dependent manner and is thus candidate for the calcium-dependent movement of the cytoskeleton at the membrane. The sequence is that of Spectrin alpha chain, non-erythrocytic 1 (SPTAN1) from Homo sapiens (Human).